We begin with the raw amino-acid sequence, 393 residues long: uncharacterized protein (393 aa).

The tract at residues 164–183 (ASDPHPGKNSPASPTGENKE) is disordered. A compositionally biased stretch (polar residues) spans 173–183 (SPASPTGENKE).

This is an uncharacterized protein from Treponema pallidum (strain Nichols).